A 364-amino-acid chain; its full sequence is Spermidine/putrescine import ATP-binding protein PotA (364 aa).

Positions 10 to 244 (IEVVNVSKIF…PAERFVADFI (235 aa)) constitute an ABC transporter domain. Residue 46–53 (GPSGCGKT) participates in ATP binding.

This sequence belongs to the ABC transporter superfamily. Spermidine/putrescine importer (TC 3.A.1.11.1) family. The complex is composed of two ATP-binding proteins (PotA), two transmembrane proteins (PotB and PotC) and a solute-binding protein (PotD).

The protein resides in the cell inner membrane. The catalysed reaction is ATP + H2O + polyamine-[polyamine-binding protein]Side 1 = ADP + phosphate + polyamineSide 2 + [polyamine-binding protein]Side 1.. Its function is as follows. Part of the ABC transporter complex PotABCD involved in spermidine/putrescine import. Responsible for energy coupling to the transport system. The chain is Spermidine/putrescine import ATP-binding protein PotA from Mesorhizobium japonicum (strain LMG 29417 / CECT 9101 / MAFF 303099) (Mesorhizobium loti (strain MAFF 303099)).